Consider the following 379-residue polypeptide: Phospholipase A1 (379 aa).

An N-terminal signal peptide occupies residues 1 to 20 (MKFITAILVIFCVYLLSTAG). The propeptide occupies 21-73 (DSKILPLKKLPSKIFGHLKSHVDNTVKKPLKVFGHLKSHVENSVGPLRMNKLT). Cysteines 76 and 154 form a disulfide. Asparagine 126 carries an N-linked (GlcNAc...) asparagine glycan. Catalysis depends on serine 204, which acts as the Nucleophile. Catalysis depends on aspartate 232, which acts as the Charge relay system. Disulfide bonds link cysteine 243/cysteine 248 and cysteine 285/cysteine 291. The Charge relay system role is filled by histidine 293.

This sequence belongs to the AB hydrolase superfamily. Lipase family. Contains five disulfide bonds. As to expression, expressed by the venom gland.

It is found in the secreted. It catalyses the reaction a 1,2-diacyl-sn-glycero-3-phosphocholine + H2O = a 2-acyl-sn-glycero-3-phosphocholine + a fatty acid + H(+). Functionally, catalyzes the hydrolysis of phosphatidylcholine with phospholipase A1 activity. May act as an allergen and induce hemolytic activity. In Dinoponera quadriceps (South American ant), this protein is Phospholipase A1.